Consider the following 329-residue polypeptide: Taste receptor type 2 member 134 (329 aa).

Residues 1 to 27 lie on the Extracellular side of the membrane; sequence MRCSLRGCVQGRGGKSGVSLSKFSPKK. A helical transmembrane segment spans residues 28-48; it reads MSFFFIFMVIFCIQSLVALLQ. The Cytoplasmic segment spans residues 49-68; it reads NGFLATVLGREWVRSQGLPA. Residues 69–89 form a helical membrane-spanning segment; sequence GDMIVACLAASRFCLHGVAIV. Over 90–121 the chain is Extracellular; sequence NNFLTFVKLWSQKIYFSVLWDFVNTVNFWCTT. Residues 122–142 traverse the membrane as a helical segment; it reads WLAIFYCVKISSFSHPIFFWI. Topologically, residues 143–153 are cytoplasmic; that stretch reads KWRISRSVPRL. A helical transmembrane segment spans residues 154–174; sequence LLGSLVIGGLSAVSSATGNTI. The Extracellular portion of the chain corresponds to 175–201; that stretch reads AFQMTACENYTLAYRTRAFYAYYFRCH. N-linked (GlcNAc...) asparagine glycosylation occurs at asparagine 183. The helical transmembrane segment at 202-222 threads the bilayer; it reads AMLMWIIPFFLFLLSVILLMF. The Cytoplasmic segment spans residues 223–251; sequence SLYRHLEHMRYRRPWSHDYSTQAHTMALK. The helical transmembrane segment at 252 to 272 threads the bilayer; that stretch reads SLAFFLVFYTSYVLFLVISVT. The Extracellular portion of the chain corresponds to 273–282; sequence RVVNVHSSWH. A helical membrane pass occupies residues 283 to 303; it reads WAWEVITYMGILLHSTILTLS. The Cytoplasmic segment spans residues 304 to 329; that stretch reads NPKMRKALKIKFPDLCVARSQDKRRG.

The protein belongs to the G-protein coupled receptor T2R family. Expressed in tongue and gastrointestinal tract.

It localises to the membrane. Its function is as follows. Putative taste receptor which may play a role in the perception of bitterness. In Rattus norvegicus (Rat), this protein is Taste receptor type 2 member 134.